The chain runs to 87 residues: MSHYSSYYGGLGYGYGSFGGPGCGCNSIRRLVGFGSGYGGFGYGSGFGGFGYGSGYGGYGYGSGFRGYGCGCRRPSCCGGYGFSSFY.

The interval 9 to 82 is 23 X 2 AA repeats of G-[YCGS]; the sequence is GGLGYGYGSF…RRPSCCGGYG (74 aa).

Belongs to the KRTAP type 19 family. In terms of assembly, interacts with hair keratins. As to expression, strong expression in narrowly defined pattern restricted to the lower and middle cortical regions of the hair shaft in both developing and cycling hair. During hair follicle regression (catagen), expression levels decrease until expression is no longer detectable in follicles at resting stage (telogen).

Functionally, in the hair cortex, hair keratin intermediate filaments are embedded in an interfilamentous matrix, consisting of hair keratin-associated proteins (KRTAP), which are essential for the formation of a rigid and resistant hair shaft through their extensive disulfide bond cross-linking with abundant cysteine residues of hair keratins. The matrix proteins include the high-sulfur and high-glycine-tyrosine keratins. This chain is Keratin-associated protein 19-3 (Krtap19-3), found in Mus musculus (Mouse).